Here is a 616-residue protein sequence, read N- to C-terminus: Probable Xaa-Pro aminopeptidase P (616 aa).

Mn(2+) contacts are provided by Asp413, Asp424, Glu522, and Glu536.

This sequence belongs to the peptidase M24B family. It depends on Mn(2+) as a cofactor.

The catalysed reaction is Release of any N-terminal amino acid, including proline, that is linked to proline, even from a dipeptide or tripeptide.. Functionally, catalyzes the removal of a penultimate prolyl residue from the N-termini of peptides. In Paracoccidioides brasiliensis (strain Pb18), this protein is Probable Xaa-Pro aminopeptidase P (AMPP).